Consider the following 116-residue polypeptide: Large ribosomal subunit protein bL17 (116 aa).

It belongs to the bacterial ribosomal protein bL17 family. Part of the 50S ribosomal subunit. Contacts protein L32.

The protein is Large ribosomal subunit protein bL17 of Sulfurovum sp. (strain NBC37-1).